The chain runs to 258 residues: Thrombin-like enzyme CPI-enzyme 2 (258 aa).

The N-terminal stretch at 1–18 (MVLIRVLANLLILQLSYA) is a signal peptide. Positions 19–24 (QKSSEL) are excised as a propeptide. A Peptidase S1 domain is found at 25–249 (VIGGDECNIN…YTDWIENIIA (225 aa)). Disulfide bonds link cysteine 31/cysteine 163, cysteine 50/cysteine 66, cysteine 98/cysteine 256, cysteine 142/cysteine 210, cysteine 174/cysteine 189, and cysteine 200/cysteine 225. N-linked (GlcNAc...) asparagine glycosylation is present at asparagine 44. The Charge relay system role is filled by histidine 65. N-linked (GlcNAc...) asparagine glycans are attached at residues asparagine 79 and asparagine 103. Aspartate 110 (charge relay system) is an active-site residue. The N-linked (GlcNAc...) asparagine glycan is linked to asparagine 121. The active-site Charge relay system is the serine 204.

The protein belongs to the peptidase S1 family. Snake venom subfamily. As to quaternary structure, monomer. N-glycosylated. Expressed by the venom gland.

Its subcellular location is the secreted. In terms of biological role, thrombin-like snake venom serine protease that cleaves fibrinogen beta (FGB) releasing fibrinopeptide B. Promotes capillary permeability-increasing activity through the release of peptides from the beta-chain of fibrinogen. The chain is Thrombin-like enzyme CPI-enzyme 2 from Gloydius ussuriensis (Ussuri mamushi).